A 431-amino-acid chain; its full sequence is Trigger factor (431 aa).

The PPIase FKBP-type domain maps to 164–249; that stretch reads GDIAVIDFKG…IKEIKRKELP (86 aa).

It belongs to the FKBP-type PPIase family. Tig subfamily.

It is found in the cytoplasm. It catalyses the reaction [protein]-peptidylproline (omega=180) = [protein]-peptidylproline (omega=0). In terms of biological role, involved in protein export. Acts as a chaperone by maintaining the newly synthesized protein in an open conformation. Functions as a peptidyl-prolyl cis-trans isomerase. This Clostridium acetobutylicum (strain ATCC 824 / DSM 792 / JCM 1419 / IAM 19013 / LMG 5710 / NBRC 13948 / NRRL B-527 / VKM B-1787 / 2291 / W) protein is Trigger factor.